Here is a 1001-residue protein sequence, read N- to C-terminus: O-GlcNAcase NagJ (1001 aa).

Residues 1-30 form the signal peptide; it reads MKRKMLKRLLTSAFACMFIANGLITTTVRA. A catalytic domain region spans residues 179-469; the sequence is VSARGIVEGF…WNRAIDMLYG (291 aa). The 273-residue stretch at 180 to 452 folds into the GH84 domain; that stretch reads SARGIVEGFY…TAADYSWNMD (273 aa). The a protein site is built by G187, K218, and D297. Residue D298 is the Proton donor of the active site. Residues Y335, 394 to 396, D401, and N429 contribute to the a protein site; that span reads WWN. Coiled coils occupy residues 515-543 and 573-597; these read KEDA…KANL and VAQL…LNTA. The region spanning 916 to 1001 is the Fibronectin type-III domain; it reads PVRDFKASEI…KESLTLRTAR (86 aa).

It belongs to the glycosyl hydrolase 84 family.

It carries out the reaction 3-O-(N-acetyl-beta-D-glucosaminyl)-L-seryl-[protein] + H2O = N-acetyl-D-glucosamine + L-seryl-[protein]. The enzyme catalyses 3-O-(N-acetyl-beta-D-glucosaminyl)-L-threonyl-[protein] + H2O = L-threonyl-[protein] + N-acetyl-D-glucosamine. Its activity is regulated as follows. Inhibited by O-(2-acetamido-2-deoxy-D-glucopyranosylidene)amino-N-phenyl-carbamate (PUGNAc) and streptozotocin. Its function is as follows. Binds carbohydrates. Capable of hydrolyzing the glycosidic link of O-GlcNAcylated proteins. Can bind and deglycosylate O-glycosylated peptides from mammals. In Clostridium perfringens (strain ATCC 13124 / DSM 756 / JCM 1290 / NCIMB 6125 / NCTC 8237 / Type A), this protein is O-GlcNAcase NagJ (nagJ).